We begin with the raw amino-acid sequence, 401 residues long: Imidazolonepropionase (401 aa).

Fe(3+) contacts are provided by His-66 and His-68. 2 residues coordinate Zn(2+): His-66 and His-68. Residues Arg-75, Tyr-138, and His-171 each contribute to the 4-imidazolone-5-propanoate site. Tyr-138 is a binding site for N-formimidoyl-L-glutamate. His-236 is a binding site for Fe(3+). Residue His-236 participates in Zn(2+) binding. Gln-239 contributes to the 4-imidazolone-5-propanoate binding site. Residue Asp-311 coordinates Fe(3+). A Zn(2+)-binding site is contributed by Asp-311. Residues Asn-313 and Gly-315 each coordinate N-formimidoyl-L-glutamate. Thr-316 is a binding site for 4-imidazolone-5-propanoate.

Belongs to the metallo-dependent hydrolases superfamily. HutI family. It depends on Zn(2+) as a cofactor. Fe(3+) serves as cofactor.

The protein resides in the cytoplasm. It catalyses the reaction 4-imidazolone-5-propanoate + H2O = N-formimidoyl-L-glutamate. Its pathway is amino-acid degradation; L-histidine degradation into L-glutamate; N-formimidoyl-L-glutamate from L-histidine: step 3/3. Catalyzes the hydrolytic cleavage of the carbon-nitrogen bond in imidazolone-5-propanoate to yield N-formimidoyl-L-glutamate. It is the third step in the universal histidine degradation pathway. This is Imidazolonepropionase from Pseudomonas syringae pv. tomato (strain ATCC BAA-871 / DC3000).